The sequence spans 290 residues: 4-hydroxy-tetrahydrodipicolinate synthase (290 aa).

A pyruvate-binding site is contributed by threonine 46. Tyrosine 134 serves as the catalytic Proton donor/acceptor. Catalysis depends on lysine 163, which acts as the Schiff-base intermediate with substrate. Position 205 (valine 205) interacts with pyruvate.

It belongs to the DapA family. Homotetramer; dimer of dimers.

It localises to the cytoplasm. It catalyses the reaction L-aspartate 4-semialdehyde + pyruvate = (2S,4S)-4-hydroxy-2,3,4,5-tetrahydrodipicolinate + H2O + H(+). Its pathway is amino-acid biosynthesis; L-lysine biosynthesis via DAP pathway; (S)-tetrahydrodipicolinate from L-aspartate: step 3/4. Catalyzes the condensation of (S)-aspartate-beta-semialdehyde [(S)-ASA] and pyruvate to 4-hydroxy-tetrahydrodipicolinate (HTPA). This chain is 4-hydroxy-tetrahydrodipicolinate synthase, found in Bacillus subtilis (strain 168).